The chain runs to 546 residues: Flavin-dependent oxygenase ucdF (546 aa).

The FAD-binding PCMH-type domain maps to 81–263; that stretch reads QGRIPYYAVM…VNTTIRTFPD (183 aa).

This sequence belongs to the oxygen-dependent FAD-linked oxidoreductase family.

Nonribosomal peptide synthetase that mediates the biosynthesis of usterphenyllins and uscandidusins, p-terphenyl derivatives. The function of ucdF within the pathway still remains to be determined. UcdE further prenylates position C-14 of ring C of usterphenyllin B to form usterphenyllin A. The pathway begin with the biosynthesis of 4-hydroxyphenylpyruvate (HPPA) from L-tyrosine, possibly by the aminotransferase ucdG. The nonribosomal peptide synthetase ucdA then condenses two HPPA units to produce atromentin. The key step in this pathway is the reduction and dehydration of atromentin to form a terphenyl triol intermediate, performed by the NAD-dependent dehydrogenase ucdB. Further O-methylation by the methyltransferase ucdC forms terphenyllin carrying two methoxy moieties at C-9 and C-12, and subsequent dihydroxylation at C-3 of ring A and C-15 of ring C by the flavin-dependent oxygenase ucdD leads to 3,15-dihydroxyterphenyllin. Prenylation by ucdE at position C-5 of ring A forms usterphenyllin B, and is followed by a second prenylation at position C-14 of ring C to form usterphenyllin A. The following furan ring formation that leads to uscandidusins A and B was proven to be an unexpected spontaneous non-enzymatic reaction. This is Flavin-dependent oxygenase ucdF from Aspergillus ustus.